The following is a 44-amino-acid chain: Photosystem I reaction center subunit IX (44 aa).

A helical transmembrane segment spans residues 9-29; sequence WFRSAPVVATIWIVLTAGILV.

It belongs to the PsaJ family.

The protein localises to the cellular thylakoid membrane. May help in the organization of the PsaE and PsaF subunits. The protein is Photosystem I reaction center subunit IX of Prochlorococcus marinus (strain MIT 9211).